The chain runs to 273 residues: NH(3)-dependent NAD(+) synthetase (273 aa).

46–53 (GISGGQDS) contacts ATP. D52 provides a ligand contact to Mg(2+). A deamido-NAD(+)-binding site is contributed by R139. An ATP-binding site is contributed by T159. Residue E164 coordinates Mg(2+). Residues K172 and D179 each coordinate deamido-NAD(+). The ATP site is built by K188 and T210. 259-260 (HK) is a deamido-NAD(+) binding site.

This sequence belongs to the NAD synthetase family. Homodimer.

It catalyses the reaction deamido-NAD(+) + NH4(+) + ATP = AMP + diphosphate + NAD(+) + H(+). Its pathway is cofactor biosynthesis; NAD(+) biosynthesis; NAD(+) from deamido-NAD(+) (ammonia route): step 1/1. Catalyzes the ATP-dependent amidation of deamido-NAD to form NAD. Uses ammonia as a nitrogen source. The sequence is that of NH(3)-dependent NAD(+) synthetase from Streptococcus agalactiae serotype Ia (strain ATCC 27591 / A909 / CDC SS700).